Consider the following 383-residue polypeptide: Putative F-box protein At1g77650 (383 aa).

The 47-residue stretch at 1 to 47 (MAFLSLPSDVVEEFLFKTPIESLVLCKPTCKQLYALCNDKRFIYNHL) folds into the F-box domain.

In Arabidopsis thaliana (Mouse-ear cress), this protein is Putative F-box protein At1g77650.